We begin with the raw amino-acid sequence, 129 residues long: MSDVAETVVAQEPEVVEPVEEKPTETGSDDVVVIDEKTSEQNGEKTEETQAEATEEKNETEAEEADKDKAVENGEAKDTNGNDRKRVSSAHEEAPVADAEEDAPLTKKSKVEDEVDVAASGDAPAVAAE.

Over residues 1–13 (MSDVAETVVAQEP) the composition is skewed to low complexity. The tract at residues 1-129 (MSDVAETVVA…SGDAPAVAAE (129 aa)) is disordered. Positions 34–94 (IDEKTSEQNG…KRVSSAHEEA (61 aa)) are enriched in basic and acidic residues. Over residues 117–129 (VAASGDAPAVAAE) the composition is skewed to low complexity.

This is an uncharacterized protein from Caenorhabditis elegans.